Consider the following 329-residue polypeptide: Serine/threonine-protein phosphatase PP1-alpha (329 aa).

Mn(2+)-binding residues include D64, H66, D92, and N124. Catalysis depends on H125, which acts as the Proton donor. 2 residues coordinate Mn(2+): H173 and H248. Residues 309–329 (GMNSGRPAVGGGRPGTTAGKK) are disordered.

Belongs to the PPP phosphatase family. PP-1 subfamily. In terms of assembly, interacts with lab-1; the interaction is direct. Interacts with knl-1; the interaction is direct. Mn(2+) is required as a cofactor.

It catalyses the reaction O-phospho-L-seryl-[protein] + H2O = L-seryl-[protein] + phosphate. The catalysed reaction is O-phospho-L-threonyl-[protein] + H2O = L-threonyl-[protein] + phosphate. In terms of biological role, serine/threonine-protein phosphatase which antagonizes the function of air-2 in the regulation of chromosome cohesion. Dephosphorylates histone H3 at 'Ser-10'. Dephosphorylates translation initiation factor eIF2alpha. Involved in the activation of chloride channel clh-3 during cell swelling and meiotic maturation. The protein is Serine/threonine-protein phosphatase PP1-alpha (gsp-1) of Caenorhabditis briggsae.